A 342-amino-acid chain; its full sequence is Ketol-acid reductoisomerase (NADP(+)) (342 aa).

The region spanning 2–182 (AELFYDDDAD…GGLRAAGIKT (181 aa)) is the KARI N-terminal Rossmann domain. NADP(+) contacts are provided by residues 25 to 28 (YGSQ), R48, S51, S53, and 83 to 86 (DQHQ). The active site involves H108. G134 contacts NADP(+). Residues 183–328 (TFTEETETDL…RELRKLFAWV (146 aa)) enclose the KARI C-terminal knotted domain. D191, E195, E227, and E231 together coordinate Mg(2+). S252 contributes to the substrate binding site.

It belongs to the ketol-acid reductoisomerase family. Mg(2+) serves as cofactor.

It carries out the reaction (2R)-2,3-dihydroxy-3-methylbutanoate + NADP(+) = (2S)-2-acetolactate + NADPH + H(+). The enzyme catalyses (2R,3R)-2,3-dihydroxy-3-methylpentanoate + NADP(+) = (S)-2-ethyl-2-hydroxy-3-oxobutanoate + NADPH + H(+). The protein operates within amino-acid biosynthesis; L-isoleucine biosynthesis; L-isoleucine from 2-oxobutanoate: step 2/4. It participates in amino-acid biosynthesis; L-valine biosynthesis; L-valine from pyruvate: step 2/4. Involved in the biosynthesis of branched-chain amino acids (BCAA). Catalyzes an alkyl-migration followed by a ketol-acid reduction of (S)-2-acetolactate (S2AL) to yield (R)-2,3-dihydroxy-isovalerate. In the isomerase reaction, S2AL is rearranged via a Mg-dependent methyl migration to produce 3-hydroxy-3-methyl-2-ketobutyrate (HMKB). In the reductase reaction, this 2-ketoacid undergoes a metal-dependent reduction by NADPH to yield (R)-2,3-dihydroxy-isovalerate. The sequence is that of Ketol-acid reductoisomerase (NADP(+)) from Beutenbergia cavernae (strain ATCC BAA-8 / DSM 12333 / CCUG 43141 / JCM 11478 / NBRC 16432 / NCIMB 13614 / HKI 0122).